The following is a 604-amino-acid chain: Numb-like protein (604 aa).

4 disordered regions span residues 1 to 68, 223 to 283, 372 to 457, and 531 to 604; these read MSRS…QWQA, GSFR…PVAA, ASAG…TLQP, and KAGA…EIEL. In terms of domain architecture, PID spans 74 to 225; sequence RKGTCSFPVR…RTSFAREGSF (152 aa). Phosphoserine occurs at positions 224 and 228. Basic and acidic residues predominate over residues 233-245; it reads PAEREAGDKKKAE. A compositionally biased stretch (low complexity) spans 246–260; it reads AAAAPAVAPGPAQPG. A Phosphoserine modification is found at Ser263. Thr279 bears the Phosphothreonine mark. Residues 409–418 are compositionally biased toward basic and acidic residues; the sequence is TPSEAERWLE. The residue at position 411 (Ser411) is a Phosphoserine. 2 stretches are compositionally biased toward low complexity: residues 427-441 and 542-552; these read QQQQ…QQQQ and SAPGGQARPRP. The segment covering 553 to 568 has biased composition (pro residues); sequence NGAPWPPEPAPAPAPE.

In terms of assembly, interacts (via PTB domain) with MAP3K7IP2 (via C-terminal). Interacts (via C-terminal) with TRAF6 (via TRAF domains). Associates with EPS15 and NOTCH1. In terms of tissue distribution, preferentially expressed in the nervous system. In the developing neocortex, expressed in postmitotic neurons in the cortical plate but not in progenitors within the ventricular zone.

The protein localises to the cytoplasm. In terms of biological role, plays a role in the process of neurogenesis. Required throughout embryonic neurogenesis to maintain neural progenitor cells, also called radial glial cells (RGCs), by allowing their daughter cells to choose progenitor over neuronal cell fate. Not required for the proliferation of neural progenitor cells before the onset of embryonic neurogenesis. Also required postnatally in the subventricular zone (SVZ) neurogenesis by regulating SVZ neuroblasts survival and ependymal wall integrity. Negative regulator of NF-kappa-B signaling pathway. The inhibition of NF-kappa-B activation is mediated at least in part, by preventing MAP3K7IP2 to interact with polyubiquitin chains of TRAF6 and RIPK1 and by stimulating the 'Lys-48'-linked polyubiquitination and degradation of TRAF6 in cortical neurons. This Mus musculus (Mouse) protein is Numb-like protein (Numbl).